The sequence spans 156 residues: Small ribosomal subunit protein uS7 (156 aa).

It belongs to the universal ribosomal protein uS7 family. As to quaternary structure, part of the 30S ribosomal subunit. Contacts proteins S9 and S11.

In terms of biological role, one of the primary rRNA binding proteins, it binds directly to 16S rRNA where it nucleates assembly of the head domain of the 30S subunit. Is located at the subunit interface close to the decoding center, probably blocks exit of the E-site tRNA. The protein is Small ribosomal subunit protein uS7 of Shewanella baltica (strain OS223).